The following is a 427-amino-acid chain: Tegument protein VP16 homolog (427 aa).

The protein belongs to the herpesviridae tegument protein VP16 protein family.

The protein resides in the virion tegument. Its subcellular location is the host nucleus. Transcriptional activator of immediate-early (IE) gene products (alpha genes). Acts as a key activator of lytic infection by initiating the lytic program through the assembly of the transcriptional regulatory VP16-induced complex composed of VP16 and two cellular factors, HCFC1 and POU2F1. VP16-induced complex represents a regulatory switch: when it is on, it promotes IE-gene expression and thus lytic infection, and when it is off, it limits IE-gene transcription favoring latent infection. Functionally, may play a role in the aggregation of tegument proteins around nucleocapsids during virus morphogenesis. This Gallus gallus (Chicken) protein is Tegument protein VP16 homolog (MDV061).